Here is a 522-residue protein sequence, read N- to C-terminus: Target of rapamycin complex 2 subunit MAPKAP1 (522 aa).

Ala2 is subject to N-acetylalanine. Residues 2-184 (AFLDNPTIIL…KKIDVYLPLH (183 aa)) are interaction with MAP3K2. Residues 2-267 (AFLDNPTIIL…GFSTLALVEK (266 aa)) are interaction with NBN. Phosphothreonine is present on Thr86. A phosphoserine mark is found at Ser128, Ser186, Ser315, and Ser356. Residues 139–267 (QSILSVRLEQ…GFSTLALVEK (129 aa)) enclose the CRIM domain. Positions 279-353 (LFVRINAAHG…QSAWEFCLVR (75 aa)) are SIN1-type RBD. Residues 382–487 (HYKSFKVSMI…IVLKVNYILE (106 aa)) enclose the SIN1-type PH domain. Arg393 lines the a 1,2-diacyl-sn-glycero-3-phospho-(1D-myo-inositol-3,4,5-trisphosphate) pocket. Thr398 is subject to Phosphothreonine. Residues Lys428 and Lys464 each contribute to the a 1,2-diacyl-sn-glycero-3-phospho-(1D-myo-inositol-3,4,5-trisphosphate) site. The interval 468-522 (FESDAATVNEIVLKVNYILESRASTARADYFAQKQRKLNRRTSFSFQKEKKSGQQ) is interaction with ATF2. The residue at position 510 (Ser510) is a Phosphoserine.

This sequence belongs to the SIN1 family. In terms of assembly, component of the mechanistic target of rapamycin complex 2 (mTORC2), consisting in two heterotretramers composed of MTOR, MLST8, RICTOR and MAPKAP1/SIN1. The mTORC2 core complex associates with PRR5/PROTOR1 and/or PRR5L/PROTOR2. Contrary to mTORC1, mTORC2 does not bind to and is not sensitive to FKBP12-rapamycin. Interacts with MAP3K2. Interacts with ATF2. Interacts with MAPK8. Interacts with GTP-bound HRAS and KRAS; inhibiting their activity. Interacts with IFNAR2. As to quaternary structure, interacts with CCDC28B. Interacts with NBN. In terms of processing, phosphorylation at Ser-128 by PKC promotes relocalization to the perinuclear region, where the mTORC2 complex specifically mediates phosphorylation of SGK1. Phosphorylated at Thr-86 by AKT1 or RPS6KB1 in the presence of growth factors; the effect of this phosphorylation is however unclear. According to two studies, phosphorylation at Thr-86 by AKT1 is part of a positive feedback loop that increases mTORC2 activation. According to another study, phosphorylation at Thr-86 and Thr-398 by RPS6KB1 promotes dissociation from the mTORC2 complex, leading to inhibit mTORC2 signaling. In terms of tissue distribution, ubiquitously expressed, with highest levels in heart and skeletal muscle.

The protein resides in the cell membrane. It is found in the endoplasmic reticulum membrane. The protein localises to the early endosome membrane. It localises to the late endosome membrane. Its subcellular location is the lysosome membrane. The protein resides in the golgi apparatus membrane. It is found in the mitochondrion outer membrane. The protein localises to the cytoplasm. It localises to the perinuclear region. Its subcellular location is the nucleus. The protein resides in the cytosol. Its activity is regulated as follows. Phosphatidylinositol 3,4,5-trisphosphate (PI(3,4,5)P3) promotes MTOR activation by relieving MAPKAP1/SIN1-mediated inhibition of MTOR that takes place in absence of PI(3,4,5)P3. Component of the mechanistic target of rapamycin complex 2 (mTORC2), which transduces signals from growth factors to pathways involved in proliferation, cytoskeletal organization, lipogenesis and anabolic output. In response to growth factors, mTORC2 phosphorylates and activates AGC protein kinase family members, including AKT (AKT1, AKT2 and AKT3), PKC (PRKCA, PRKCB and PRKCE) and SGK1. In contrast to mTORC1, mTORC2 is nutrient-insensitive. Within the mTORC2 complex, MAPKAP1/SIN1 acts as a substrate adapter which recognizes and binds AGC protein kinase family members for phosphorylation by MTOR. mTORC2 plays a critical role in AKT1 activation by mediating phosphorylation of different sites depending on the context, such as 'Thr-450', 'Ser-473', 'Ser-477' or 'Thr-479', facilitating the phosphorylation of the activation loop of AKT1 on 'Thr-308' by PDPK1/PDK1 which is a prerequisite for full activation. mTORC2 catalyzes the phosphorylation of SGK1 at 'Ser-422' and of PRKCA on 'Ser-657'. The mTORC2 complex also phosphorylates various proteins involved in insulin signaling, such as FBXW8 and IGF2BP1. mTORC2 acts upstream of Rho GTPases to regulate the actin cytoskeleton, probably by activating one or more Rho-type guanine nucleotide exchange factors. mTORC2 promotes the serum-induced formation of stress-fibers or F-actin. MAPKAP1 inhibits MAP3K2 by preventing its dimerization and autophosphorylation. Inhibits HRAS and KRAS independently of mTORC2 complex. Enhances osmotic stress-induced phosphorylation of ATF2 and ATF2-mediated transcription. Involved in ciliogenesis, regulates cilia length through its interaction with CCDC28B independently of mTORC2 complex. In terms of biological role, in contrast to isoform 1, isoform 2 and isoform 6, isoform 4 is not a component of the a mTORC2 complex. The protein is Target of rapamycin complex 2 subunit MAPKAP1 of Homo sapiens (Human).